The primary structure comprises 123 residues: MPTINQLIAKGREVRAKRNKVPALQGCPQKRGVCTRVYTTTPKKPNSALRKVAKVRLTNGYEVVSYIPGEGHNLQEHSVVLIRGGRVKDLPGVRYHILRGVLDTQGIAKRRQRRSLYGAKRPK.

The residue at position 89 (Asp89) is a 3-methylthioaspartic acid.

The protein belongs to the universal ribosomal protein uS12 family. As to quaternary structure, part of the 30S ribosomal subunit. Contacts proteins S8 and S17. May interact with IF1 in the 30S initiation complex.

In terms of biological role, with S4 and S5 plays an important role in translational accuracy. Interacts with and stabilizes bases of the 16S rRNA that are involved in tRNA selection in the A site and with the mRNA backbone. Located at the interface of the 30S and 50S subunits, it traverses the body of the 30S subunit contacting proteins on the other side and probably holding the rRNA structure together. The combined cluster of proteins S8, S12 and S17 appears to hold together the shoulder and platform of the 30S subunit. The polypeptide is Small ribosomal subunit protein uS12 (Acidiphilium cryptum (strain JF-5)).